The primary structure comprises 239 residues: Phosphoribosylaminoimidazole-succinocarboxamide synthase (239 aa).

Belongs to the SAICAR synthetase family.

It carries out the reaction 5-amino-1-(5-phospho-D-ribosyl)imidazole-4-carboxylate + L-aspartate + ATP = (2S)-2-[5-amino-1-(5-phospho-beta-D-ribosyl)imidazole-4-carboxamido]succinate + ADP + phosphate + 2 H(+). The protein operates within purine metabolism; IMP biosynthesis via de novo pathway; 5-amino-1-(5-phospho-D-ribosyl)imidazole-4-carboxamide from 5-amino-1-(5-phospho-D-ribosyl)imidazole-4-carboxylate: step 1/2. The polypeptide is Phosphoribosylaminoimidazole-succinocarboxamide synthase (Brevibacillus brevis (strain 47 / JCM 6285 / NBRC 100599)).